The primary structure comprises 1359 residues: ABC transporter C family member 1 (1359 aa).

In terms of domain architecture, ABC transmembrane type-1 1 spans 111–394; it reads NKLTIFLQIL…LPNSIQQLQS (284 aa). 6 consecutive transmembrane segments (helical) span residues 119 to 139, 147 to 167, 214 to 234, 244 to 264, 332 to 352, and 363 to 383; these read ILTNILSILSPLSLKYFIQFI, SFLAGIGYCILLLIASFSYTF, LLSVDVGIISNFFWIEHMGIF, LALLCWVIGWSGLVGFAIMVI, MIFWIFAEMMKQAVNAIVLVL, and ITLEVAFTTISIFVSLRIPLL. The disordered stretch occupies residues 409-478; it reads PEIQQNHSSN…QQQQQQQQQQ (70 aa). Over residues 420–433 the composition is skewed to acidic residues; that stretch reads EEEEEDEYDDDINS. Residues 440–450 show a composition bias toward polar residues; that stretch reads HNGSFNWNQVD. The segment covering 459–478 has biased composition (low complexity); that stretch reads GNQQQQQQQQQQQQQQQQQQ. The ABC transporter 1 domain maps to 470–690; that stretch reads QQQQQQQQQQ…IDFESIMKTK (221 aa). 502-509 serves as a coordination point for ATP; it reads GVVGSGKT. An ABC transmembrane type-1 2 domain is found at 763 to 1061; it reads LRVYKEYFKH…LEVKMNSVER (299 aa). A run of 5 helical transmembrane segments spans residues 773–793, 819–839, 884–904, 906–926, and 999–1021; these read GSSIPLFIMTCIVYMISQIIY, IYLLFIVGFIIFLVIRYFMMA, VDLLLFDLFSDVLYCGSTVLV, IGIMIYISPLIIIPFLLLIGI, and WVAVRLEFISSIVVFLAAFFSLF. Residues 1073 to 1102 adopt a coiled-coil conformation; it reads NSKINFFRNEQQEEEEEEEEEFDFDNDDYD. The ABC transporter 2 domain occupies 1116–1350; sequence IEFRNVEIKY…QESRFSKLVK (235 aa). Residue 1150 to 1157 coordinates ATP; sequence GRTGAGKS.

The protein belongs to the ABC transporter superfamily. ABCC family. Conjugate transporter (TC 3.A.1.208) subfamily.

It is found in the membrane. The sequence is that of ABC transporter C family member 1 (abcC1) from Dictyostelium discoideum (Social amoeba).